The primary structure comprises 145 residues: Plastocyanin, chloroplastic (145 aa).

Residues 1-47 constitute a chloroplast transit peptide; that stretch reads MKATLRAPASRASAVRPVASLKAAAQRVASVAGVSVASLALTLAAHA. Residues 48-145 enclose the Plastocyanin-like domain; the sequence is DATVKLGADS…AGMVGKIIVQ (98 aa). Residues His-85, Cys-130, His-133, and Met-138 each coordinate Cu cation.

Belongs to the plastocyanin family. The cofactor is Cu(2+).

It localises to the plastid. Its subcellular location is the chloroplast thylakoid membrane. Functionally, participates in electron transfer between P700 and the cytochrome b6-f complex in photosystem I. In Chlamydomonas reinhardtii (Chlamydomonas smithii), this protein is Plastocyanin, chloroplastic (PETE).